The sequence spans 608 residues: Granule-bound starch synthase 1, chloroplastic/amyloplastic (608 aa).

A chloroplast-targeting transit peptide spans 1–76 (MATITASHFV…EGGMAAGTIV (76 aa)). Position 96 (Lys96) interacts with ADP-alpha-D-glucose.

The protein belongs to the glycosyltransferase 1 family. Bacterial/plant glycogen synthase subfamily.

The protein localises to the plastid. It localises to the chloroplast. It is found in the amyloplast. The catalysed reaction is an NDP-alpha-D-glucose + [(1-&gt;4)-alpha-D-glucosyl](n) = [(1-&gt;4)-alpha-D-glucosyl](n+1) + a ribonucleoside 5'-diphosphate + H(+). Its pathway is glycan biosynthesis; starch biosynthesis. Its function is as follows. Required for the synthesis of amylose. The sequence is that of Granule-bound starch synthase 1, chloroplastic/amyloplastic (WAXY) from Ipomoea batatas (Sweet potato).